Here is a 336-residue protein sequence, read N- to C-terminus: Holliday junction branch migration complex subunit RuvB (336 aa).

The large ATPase domain (RuvB-L) stretch occupies residues 4-184 (ADRLISAGAT…FGIVQRLEFY (181 aa)). Residues I23, R24, G65, K68, T69, T70, 131 to 133 (EDY), R174, Y184, and R221 contribute to the ATP site. T69 serves as a coordination point for Mg(2+). Residues 185–255 (QVPDLQHIVG…IAAQALDMLN (71 aa)) are small ATPAse domain (RuvB-S). Residues 258–336 (AEGFDYMDRK…HFGITPPEMP (79 aa)) form a head domain (RuvB-H) region. Positions 294, 313, and 318 each coordinate DNA.

It belongs to the RuvB family. In terms of assembly, homohexamer. Forms an RuvA(8)-RuvB(12)-Holliday junction (HJ) complex. HJ DNA is sandwiched between 2 RuvA tetramers; dsDNA enters through RuvA and exits via RuvB. An RuvB hexamer assembles on each DNA strand where it exits the tetramer. Each RuvB hexamer is contacted by two RuvA subunits (via domain III) on 2 adjacent RuvB subunits; this complex drives branch migration. In the full resolvosome a probable DNA-RuvA(4)-RuvB(12)-RuvC(2) complex forms which resolves the HJ.

Its subcellular location is the cytoplasm. It carries out the reaction ATP + H2O = ADP + phosphate + H(+). The RuvA-RuvB-RuvC complex processes Holliday junction (HJ) DNA during genetic recombination and DNA repair, while the RuvA-RuvB complex plays an important role in the rescue of blocked DNA replication forks via replication fork reversal (RFR). RuvA specifically binds to HJ cruciform DNA, conferring on it an open structure. The RuvB hexamer acts as an ATP-dependent pump, pulling dsDNA into and through the RuvAB complex. RuvB forms 2 homohexamers on either side of HJ DNA bound by 1 or 2 RuvA tetramers; 4 subunits per hexamer contact DNA at a time. Coordinated motions by a converter formed by DNA-disengaged RuvB subunits stimulates ATP hydrolysis and nucleotide exchange. Immobilization of the converter enables RuvB to convert the ATP-contained energy into a lever motion, pulling 2 nucleotides of DNA out of the RuvA tetramer per ATP hydrolyzed, thus driving DNA branch migration. The RuvB motors rotate together with the DNA substrate, which together with the progressing nucleotide cycle form the mechanistic basis for DNA recombination by continuous HJ branch migration. Branch migration allows RuvC to scan DNA until it finds its consensus sequence, where it cleaves and resolves cruciform DNA. This is Holliday junction branch migration complex subunit RuvB from Salmonella arizonae (strain ATCC BAA-731 / CDC346-86 / RSK2980).